We begin with the raw amino-acid sequence, 338 residues long: D-erythrose-4-phosphate dehydrogenase (338 aa).

An NAD(+)-binding site is contributed by Arg11–Ile12. Substrate is bound by residues Ser153–Thr155, Arg199, Thr212–Lys213, and Arg235. Cys154 functions as the Nucleophile in the catalytic mechanism. An NAD(+)-binding site is contributed by Asn317.

This sequence belongs to the glyceraldehyde-3-phosphate dehydrogenase family. Epd subfamily. In terms of assembly, homotetramer.

It localises to the cytoplasm. It catalyses the reaction D-erythrose 4-phosphate + NAD(+) + H2O = 4-phospho-D-erythronate + NADH + 2 H(+). Its pathway is cofactor biosynthesis; pyridoxine 5'-phosphate biosynthesis; pyridoxine 5'-phosphate from D-erythrose 4-phosphate: step 1/5. Its function is as follows. Catalyzes the NAD-dependent conversion of D-erythrose 4-phosphate to 4-phosphoerythronate. This is D-erythrose-4-phosphate dehydrogenase from Shewanella oneidensis (strain ATCC 700550 / JCM 31522 / CIP 106686 / LMG 19005 / NCIMB 14063 / MR-1).